The following is a 129-amino-acid chain: Large ribosomal subunit protein bL21 (129 aa).

It belongs to the bacterial ribosomal protein bL21 family. In terms of assembly, part of the 50S ribosomal subunit. Contacts protein L20.

Its function is as follows. This protein binds to 23S rRNA in the presence of protein L20. The chain is Large ribosomal subunit protein bL21 from Prochlorococcus marinus (strain MIT 9313).